Consider the following 161-residue polypeptide: 3-hydroxyacyl-[acyl-carrier-protein] dehydratase FabZ (161 aa).

The active site involves H66.

This sequence belongs to the thioester dehydratase family. FabZ subfamily.

The protein localises to the cytoplasm. It carries out the reaction a (3R)-hydroxyacyl-[ACP] = a (2E)-enoyl-[ACP] + H2O. Functionally, involved in unsaturated fatty acids biosynthesis. Catalyzes the dehydration of short chain beta-hydroxyacyl-ACPs and long chain saturated and unsaturated beta-hydroxyacyl-ACPs. The protein is 3-hydroxyacyl-[acyl-carrier-protein] dehydratase FabZ of Gluconacetobacter diazotrophicus (strain ATCC 49037 / DSM 5601 / CCUG 37298 / CIP 103539 / LMG 7603 / PAl5).